A 423-amino-acid polypeptide reads, in one-letter code: Enolase (423 aa).

Gln-166 is a (2R)-2-phosphoglycerate binding site. Catalysis depends on Glu-208, which acts as the Proton donor. Asp-242, Glu-283, and Asp-310 together coordinate Mg(2+). (2R)-2-phosphoglycerate contacts are provided by Lys-335, Arg-364, Ser-365, and Lys-386. The active-site Proton acceptor is the Lys-335.

This sequence belongs to the enolase family. Mg(2+) is required as a cofactor.

It is found in the cytoplasm. It localises to the secreted. Its subcellular location is the cell surface. The enzyme catalyses (2R)-2-phosphoglycerate = phosphoenolpyruvate + H2O. It functions in the pathway carbohydrate degradation; glycolysis; pyruvate from D-glyceraldehyde 3-phosphate: step 4/5. Its function is as follows. Catalyzes the reversible conversion of 2-phosphoglycerate (2-PG) into phosphoenolpyruvate (PEP). It is essential for the degradation of carbohydrates via glycolysis. The sequence is that of Enolase from Elusimicrobium minutum (strain Pei191).